Here is a 1403-residue protein sequence, read N- to C-terminus: Eukaryotic translation initiation factor 4 gamma (1403 aa).

Composition is skewed to polar residues over residues 1–11 (MSSKPPSNTPK), 19–39 (ASSQ…TATA), and 50–60 (EPTNTSRANAQ). 4 disordered regions span residues 1–381 (MSSK…GSTP), 439–464 (SRSG…RNGF), 488–774 (VVVP…KRDL), and 861–1003 (AFSD…EALL). At serine 83 the chain carries Phosphoserine. The span at 109-137 (DNTSKPSANSSAERTSSQHQKPETSSQIG) shows a compositional bias: polar residues. Composition is skewed to low complexity over residues 190 to 208 (SGVS…SVTS) and 231 to 248 (PRPT…ANGA). Over residues 249-269 (PTNKPSTDINTTDPATQTTQV) the composition is skewed to polar residues. A compositionally biased stretch (low complexity) spans 270-291 (SASNSPALSGSSTPSNTSSRSN). The segment covering 298–308 (FSEKRHYDRYG) has biased composition (basic and acidic residues). The span at 325–334 (NYNNSGNNRN) shows a compositional bias: low complexity. Polar residues-rich tracts occupy residues 346 to 381 (RNYN…GSTP), 439 to 460 (SRSG…TLSP), and 493 to 508 (KNAS…SRAE). Phosphoserine is present on residues serine 452, serine 455, serine 456, and serine 459. Residues 537 to 714 (IQEKAEAEAK…GKREADKNPE (178 aa)) are compositionally biased toward basic and acidic residues. The span at 720–737 (PLASSEANVDTSKQTNAT) shows a compositional bias: polar residues. Residues 741–754 (VVDKTKVEKLKASE) are compositionally biased toward basic and acidic residues. Residues 757–768 (STSSLSSPSHST) show a composition bias toward low complexity. Serine 866 and serine 882 each carry phosphoserine. Low complexity predominate over residues 868–886 (RGMYSSSRQSSRSGSNTHS). Position 884 is a phosphothreonine (threonine 884). Serine 886, serine 911, serine 919, and serine 921 each carry phosphoserine. The residue at position 923 (tyrosine 923) is a Phosphotyrosine. Over residues 986 to 995 (KLTEKPAETK) the composition is skewed to basic and acidic residues. Residues 1009-1245 (QRKVKGSLNK…MDVMDSRKNG (237 aa)) form the MIF4G domain. The tract at residues 1266 to 1403 (AERKKALAES…QKDSNSKTSS (138 aa)) is disordered. Over residues 1284-1295 (HGRDMNRGDSRM) the composition is skewed to basic and acidic residues. Polar residues-rich tracts occupy residues 1302–1313 (PPFSSSDWSNNK), 1328–1341 (SGTQ…SLSS), and 1348–1358 (VSRTPSRQNSA). Serine 1333 is subject to Phosphoserine. Residues 1383-1403 (LEEHDHDNDGGQKDSNSKTSS) show a composition bias toward basic and acidic residues.

It belongs to the eukaryotic initiation factor 4G family.

It localises to the cytoplasm. Its subcellular location is the perinuclear region. In terms of biological role, component of the protein complex eIF4F, which is involved in the recognition of the mRNA cap, ATP-dependent unwinding of 5'-terminal secondary structure and recruitment of mRNA to the ribosome. In Schizosaccharomyces pombe (strain 972 / ATCC 24843) (Fission yeast), this protein is Eukaryotic translation initiation factor 4 gamma (tif471).